Reading from the N-terminus, the 308-residue chain is Pseudouridine-5'-phosphate glycosidase (308 aa).

The active-site Proton donor is Glu-29. Substrate-binding residues include Lys-90 and Val-110. Asp-142 is a Mn(2+) binding site. 144–146 contacts substrate; it reads SSD. The active-site Nucleophile is Lys-163.

It belongs to the pseudouridine-5'-phosphate glycosidase family. Homotrimer. Mn(2+) serves as cofactor.

It carries out the reaction D-ribose 5-phosphate + uracil = psi-UMP + H2O. Functionally, catalyzes the reversible cleavage of pseudouridine 5'-phosphate (PsiMP) to ribose 5-phosphate and uracil. Functions biologically in the cleavage direction, as part of a pseudouridine degradation pathway. This chain is Pseudouridine-5'-phosphate glycosidase, found in Serratia proteamaculans (strain 568).